The sequence spans 197 residues: Glycerol-3-phosphate acyltransferase (197 aa).

Transmembrane regions (helical) follow at residues 1 to 21, 69 to 89, 110 to 130, and 152 to 172; these read MTAL…GLLV, LPML…AVVG, VMLF…LVVL, and VFFT…SFIF.

It belongs to the PlsY family. As to quaternary structure, probably interacts with PlsX.

The protein localises to the cell membrane. The enzyme catalyses an acyl phosphate + sn-glycerol 3-phosphate = a 1-acyl-sn-glycero-3-phosphate + phosphate. It participates in lipid metabolism; phospholipid metabolism. Functionally, catalyzes the transfer of an acyl group from acyl-phosphate (acyl-PO(4)) to glycerol-3-phosphate (G3P) to form lysophosphatidic acid (LPA). This enzyme utilizes acyl-phosphate as fatty acyl donor, but not acyl-CoA or acyl-ACP. This Geobacillus kaustophilus (strain HTA426) protein is Glycerol-3-phosphate acyltransferase.